The chain runs to 480 residues: MKKTKNNYYTTPLAIGLSTFALASIVYGGIQNETHASEKSNMDVSKKVAEVETSKPPVENTAEVETSKAPVENTAEVETSKAPVENTAEVETSKAPVENTAEVETSKAPVENTAEVETSKAPVENTAEVETSKAPVENTAEVETSKAPVENTAEVETSKAPVENTAEVETSKAPVENTAEVETSKAPVENTAEVETSKAPVENTAEVETSKAPVENTAEVETSKALVQNRTALRAATHEHSAQWLNNYKKGYGYGPYPLGINGGIHYGVDFFMNIGTPVKAISSGKIVEAGWSNYGGGNQIGLIENDGVHRQWYMHLSKYNVKVGDYVKAGQIIGWSGSTGYSTAPHLHFQRMVNSFSNSTAQDPMPFLKSAGYGKAGGTVTPTPNTGWKTNKYGTLYKSESASFTPNTDIITRTTGPFRSMPQSGVLKAGQTIHYDEVMKQDGHVWVGYTGNSGQRIYLPVRTWNKSTNTLGVLWGTIK.

The N-terminal stretch at 1–23 is a signal peptide; sequence MKKTKNNYYTTPLAIGLSTFALA. Positions 24–234 are excised as a propeptide; it reads SIVYGGIQNE…ALVQNRTALR (211 aa). Repeat copies occupy residues 49–61, 62–74, 75–87, 88–100, 101–113, 114–126, 127–139, 140–152, 153–165, 166–178, 179–191, 192–204, and 205–217. The tract at residues 49-230 is 14 X 13 AA tandem repeats of A-E-V-E-T-S-K-[AP]-P-V-E-N-T; sequence AEVETSKPPV…ETSKALVQNR (182 aa). Positions 51 to 219 are disordered; the sequence is VETSKPPVEN…SKAPVENTAE (169 aa). Residues 218–230 form a 14; approximate repeat; that stretch reads AEVETSKALVQNR. Zn(2+)-binding residues include histidine 266 and aspartate 270. The active site involves histidine 347. Histidine 349 serves as a coordination point for Zn(2+). An SH3b domain is found at 400–468; the sequence is SESASFTPNT…YLPVRTWNKS (69 aa).

This sequence belongs to the peptidase M23B family. In terms of assembly, monomer. The cofactor is Zn(2+).

Its subcellular location is the secreted. The enzyme catalyses Hydrolysis of the -Gly-|-Gly- bond in the pentaglycine inter-peptide link joining staphylococcal cell wall peptidoglycans.. In terms of biological role, lyses staphylococcal cells by hydrolyzing the polyglycine interpeptide bridges of the peptidoglycan. This is Lysostaphin (lss) from Staphylococcus staphylolyticus.